The following is a 168-amino-acid chain: Peroxynitrite isomerase (168 aa).

A GXWXGXG motif is present at residues 25-31 (GTWRGAG). H160 is a binding site for heme b.

This sequence belongs to the nitrobindin family. As to quaternary structure, homodimer. Heme b is required as a cofactor.

It catalyses the reaction peroxynitrite = nitrate. The protein operates within nitrogen metabolism. Heme-binding protein able to scavenge peroxynitrite and to protect free L-tyrosine against peroxynitrite-mediated nitration, by acting as a peroxynitrite isomerase that converts peroxynitrite to nitrate. Therefore, this protein likely plays a role in peroxynitrite sensing and in the detoxification of reactive nitrogen and oxygen species (RNS and ROS, respectively). Is able to bind nitric oxide (NO) in vitro, but may act as a sensor of peroxynitrite levels in vivo. This chain is Peroxynitrite isomerase, found in Nocardia farcinica (strain IFM 10152).